A 256-amino-acid chain; its full sequence is Imidazole glycerol phosphate synthase subunit HisF (256 aa).

Active-site residues include Asp-11 and Asp-130.

This sequence belongs to the HisA/HisF family. Heterodimer of HisH and HisF.

The protein localises to the cytoplasm. It carries out the reaction 5-[(5-phospho-1-deoxy-D-ribulos-1-ylimino)methylamino]-1-(5-phospho-beta-D-ribosyl)imidazole-4-carboxamide + L-glutamine = D-erythro-1-(imidazol-4-yl)glycerol 3-phosphate + 5-amino-1-(5-phospho-beta-D-ribosyl)imidazole-4-carboxamide + L-glutamate + H(+). It functions in the pathway amino-acid biosynthesis; L-histidine biosynthesis; L-histidine from 5-phospho-alpha-D-ribose 1-diphosphate: step 5/9. Its function is as follows. IGPS catalyzes the conversion of PRFAR and glutamine to IGP, AICAR and glutamate. The HisF subunit catalyzes the cyclization activity that produces IGP and AICAR from PRFAR using the ammonia provided by the HisH subunit. This Prochlorococcus marinus (strain MIT 9301) protein is Imidazole glycerol phosphate synthase subunit HisF.